A 131-amino-acid chain; its full sequence is Probable lactoylglutathione lyase (131 aa).

The VOC domain occupies F2 to T126. H5 is a binding site for Ni(2+). Residue R9 participates in substrate binding. Residue E56 coordinates Ni(2+). Residues N60 and H74 each coordinate substrate. Residues H74 and E122 each contribute to the Ni(2+) site. E122 functions as the Proton donor/acceptor in the catalytic mechanism.

It belongs to the glyoxalase I family. Ni(2+) serves as cofactor.

The catalysed reaction is (R)-S-lactoylglutathione = methylglyoxal + glutathione. It participates in secondary metabolite metabolism; methylglyoxal degradation; (R)-lactate from methylglyoxal: step 1/2. Functionally, catalyzes the conversion of hemimercaptal, formed from methylglyoxal and glutathione, to S-lactoylglutathione. The protein is Probable lactoylglutathione lyase (gloA) of Synechocystis sp. (strain ATCC 27184 / PCC 6803 / Kazusa).